The chain runs to 505 residues: GMP synthase [glutamine-hydrolyzing] (505 aa).

In terms of domain architecture, Glutamine amidotransferase type-1 spans 2–190; that stretch reads SVVILDFGSQ…FLEICGVARD (189 aa). Cys79 serves as the catalytic Nucleophile. Residues His165 and Glu167 contribute to the active site. Residues 191 to 380 enclose the GMPS ATP-PPase domain; the sequence is WNAEHIVDEL…LGLPDAIRMR (190 aa). An ATP-binding site is contributed by 218–224; that stretch reads SGGVDSS.

In terms of assembly, homodimer.

The enzyme catalyses XMP + L-glutamine + ATP + H2O = GMP + L-glutamate + AMP + diphosphate + 2 H(+). It participates in purine metabolism; GMP biosynthesis; GMP from XMP (L-Gln route): step 1/1. In terms of biological role, catalyzes the synthesis of GMP from XMP. The sequence is that of GMP synthase [glutamine-hydrolyzing] from Deinococcus geothermalis (strain DSM 11300 / CIP 105573 / AG-3a).